The chain runs to 67 residues: Large ribosomal subunit protein bL35 (67 aa).

This sequence belongs to the bacterial ribosomal protein bL35 family.

In Leptospira interrogans serogroup Icterohaemorrhagiae serovar Lai (strain 56601), this protein is Large ribosomal subunit protein bL35.